We begin with the raw amino-acid sequence, 165 residues long: NADPH-dependent 7-cyano-7-deazaguanine reductase (165 aa).

The active-site Thioimide intermediate is Cys-56. Asp-63 functions as the Proton donor in the catalytic mechanism. Substrate is bound by residues 78 to 80 and 97 to 98; these read VES and HE.

It belongs to the GTP cyclohydrolase I family. QueF type 1 subfamily.

Its subcellular location is the cytoplasm. It catalyses the reaction 7-aminomethyl-7-carbaguanine + 2 NADP(+) = 7-cyano-7-deazaguanine + 2 NADPH + 3 H(+). Its pathway is tRNA modification; tRNA-queuosine biosynthesis. Its function is as follows. Catalyzes the NADPH-dependent reduction of 7-cyano-7-deazaguanine (preQ0) to 7-aminomethyl-7-deazaguanine (preQ1). The protein is NADPH-dependent 7-cyano-7-deazaguanine reductase of Oceanobacillus iheyensis (strain DSM 14371 / CIP 107618 / JCM 11309 / KCTC 3954 / HTE831).